Consider the following 417-residue polypeptide: Alpha-galactosidase (417 aa).

An N-terminal signal peptide occupies residues 1–55; it reads MARASSSSSPPSPRLLLLLLVAVAATLLPEAAALGNFTAESRGARWRSRRARRRA. 9 residues coordinate alpha-D-galactose: W71, D106, D107, C156, K183, D185, W219, R236, and D240. 2 disulfides stabilise this stretch: C76–C108 and C156–C187. The active-site Nucleophile is the D185. D240 functions as the Proton donor in the catalytic mechanism.

It belongs to the glycosyl hydrolase 27 family.

The catalysed reaction is Hydrolysis of terminal, non-reducing alpha-D-galactose residues in alpha-D-galactosides, including galactose oligosaccharides, galactomannans and galactolipids.. It catalyses the reaction melibiose + H2O = D-galactose + D-glucose. It carries out the reaction raffinose + H2O = sucrose + D-galactose. The enzyme catalyses stachyose + H2O = raffinose + D-galactose. The catalysed reaction is alpha-D-Gal-(1-&gt;6)-beta-D-Man-(1-&gt;4)-beta-D-Man-(1-&gt;4)-D-Man + H2O = beta-D-Man-(1-&gt;4)-beta-D-Man-(1-&gt;4)-D-Man + D-galactose. It catalyses the reaction beta-D-Man-(1-&gt;4)-[alpha-D-Gal-(1-&gt;6)]-beta-D-Man-(1-&gt;4)-beta-D-Man-(1-&gt;4)-D-Man + H2O = beta-D-Man-(1-&gt;4)-beta-D-Man-(1-&gt;4)-beta-D-Man-(1-&gt;4)-D-Man + D-galactose. With respect to regulation, 1 mM Hg(2+) and Ag(2+) decrease activity by 98% and 96%, respectively. 1 mM Para-chloromercuribenzoic acid (PCMB) completely inhibits enzymatic activity. Its function is as follows. Hydrolyzes melibiose, raffinose and stachyose in the following decreasing order of reactivity: raffinose, melibiose, stachyose. Acts on both the terminal alpha-galactosyl residue and the side-chain alpha-galactosyl residue of the galactomanno-oligosaccharides. This chain is Alpha-galactosidase, found in Oryza sativa subsp. japonica (Rice).